We begin with the raw amino-acid sequence, 292 residues long: Protoheme IX farnesyltransferase (292 aa).

Helical transmembrane passes span 12–32, 43–63, 94–114, 115–135, 144–164, 169–189, 216–236, 239–259, and 267–287; these read ITWL…PQAS, LLRL…TAAL, LAFG…GVNL, LSAG…TPMK, VGAI…AGGL, WVLF…IAWM, IVIY…LGMS, LYLV…VRVA, and ARGV…LMLL.

Belongs to the UbiA prenyltransferase family. Protoheme IX farnesyltransferase subfamily.

Its subcellular location is the cell inner membrane. It carries out the reaction heme b + (2E,6E)-farnesyl diphosphate + H2O = Fe(II)-heme o + diphosphate. It functions in the pathway porphyrin-containing compound metabolism; heme O biosynthesis; heme O from protoheme: step 1/1. Its function is as follows. Converts heme B (protoheme IX) to heme O by substitution of the vinyl group on carbon 2 of heme B porphyrin ring with a hydroxyethyl farnesyl side group. This is Protoheme IX farnesyltransferase from Solibacter usitatus (strain Ellin6076).